The chain runs to 209 residues: HTLV-1 basic zipper factor (209 aa).

Positions 48 to 162 (DGLLSLEEES…SARKEKMQEL (115 aa)) are disordered. Basic and acidic residues-rich tracts occupy residues 70–87 (APPR…AEEK) and 94–114 (REKE…EEKA). Positions 87 to 92 (KRKRKK) match the Nuclear localization signal 1 motif. 2 short sequence motifs (nuclear localization signal) span residues 116–120 (RRRRA) and 137–141 (RRERK). Basic and acidic residues predominate over residues 122–160 (KKAADVARRKQEEQERRERKWRQGAEKAKQHSARKEKMQ).

It belongs to the HTLV-1 HBZ protein family. Interacts with host ATF4; this interaction inhibits viral RNA transcriptional activation by preventing ATF4 binding to Tax-responsive elements. Interacts with host CREB1; this interaction inhibits host CREB1 transcriptional activity. Interacts with host JUN, JUNB and JUND. Interacts with host EP300.

Its subcellular location is the host nucleus. In terms of biological role, contributes to the regulation of viral RNA transcription by interacting with host proteins involved in transcriptional activation such as ATF4, or CREB1, and by inhibiting their activity. Additionally, HBZ suppresses host NF-kappa-B-driven transcription mediated by host RELA as well as transcription of some classical NF-kappa-B target genes, including IL8, IL2RA, IRF4, VCAM1, and VEGFA. The chain is HTLV-1 basic zipper factor (HBZ) from Homo sapiens (Human).